We begin with the raw amino-acid sequence, 305 residues long: UDP-3-O-acyl-N-acetylglucosamine deacetylase (305 aa).

Zn(2+)-binding residues include His-79, His-238, and Asp-242. Residue His-265 is the Proton donor of the active site.

Belongs to the LpxC family. It depends on Zn(2+) as a cofactor.

It carries out the reaction a UDP-3-O-[(3R)-3-hydroxyacyl]-N-acetyl-alpha-D-glucosamine + H2O = a UDP-3-O-[(3R)-3-hydroxyacyl]-alpha-D-glucosamine + acetate. The protein operates within glycolipid biosynthesis; lipid IV(A) biosynthesis; lipid IV(A) from (3R)-3-hydroxytetradecanoyl-[acyl-carrier-protein] and UDP-N-acetyl-alpha-D-glucosamine: step 2/6. Its function is as follows. Catalyzes the hydrolysis of UDP-3-O-myristoyl-N-acetylglucosamine to form UDP-3-O-myristoylglucosamine and acetate, the committed step in lipid A biosynthesis. In Mannheimia succiniciproducens (strain KCTC 0769BP / MBEL55E), this protein is UDP-3-O-acyl-N-acetylglucosamine deacetylase.